Here is a 129-residue protein sequence, read N- to C-terminus: Transcriptional regulator WhiB2 (129 aa).

The interval 23–45 (SHAPHIDTGSTPTGAAGRPQLSL) is disordered. A 4Fe-4S Wbl-type domain is found at 66–123 (LCAQTDPEAFFPEKGGSTREAKRICQGCEVRDACLEYALAHDERFGIWGGLSERERRR). The [4Fe-4S] cluster site is built by Cys67, Cys90, Cys93, and Cys99.

This sequence belongs to the WhiB family. [4Fe-4S] cluster serves as cofactor. In terms of processing, the Fe-S cluster can be nitrosylated by nitric oxide (NO). Upon Fe-S cluster removal intramolecular disulfide bonds are formed.

The protein resides in the cytoplasm. Functionally, acts as a transcriptional regulator. Probably redox-responsive. The apo- but not holo-form probably binds DNA. This chain is Transcriptional regulator WhiB2 (whiB2), found in Mycolicibacterium smegmatis (strain ATCC 700084 / mc(2)155) (Mycobacterium smegmatis).